We begin with the raw amino-acid sequence, 211 residues long: 5,6-dimethylbenzimidazole synthase (211 aa).

FMN contacts are provided by residues 22–26, S50, L99, and S158; that span reads RRDVR.

This sequence belongs to the BluB family. Homooctamer.

It carries out the reaction FMNH2 + O2 = dialurate + 5,6-dimethylbenzimidazole + D-erythrose 4-phosphate + H(+). Functionally, involved in the biosynthesis of cobalamin (vitamin B12). Catalyzes the oxidative fragmentation and contraction of the isoalloxazine heterocycle and the cleavage of the ribityl tail of FMNH(2) to form 5,6-dimethylbenzimidazole (DMB) and D-erythrose 4-phosphate (E4P). NAD(P)H is only required initially to reduce FMN and oxygen drives the oxidative fragmentation. The protein is 5,6-dimethylbenzimidazole synthase of Rhodospirillum rubrum (strain ATCC 11170 / ATH 1.1.1 / DSM 467 / LMG 4362 / NCIMB 8255 / S1).